A 197-amino-acid chain; its full sequence is Phospholipid hydroperoxide glutathione peroxidase (197 aa).

Ser40 carries the phosphoserine modification. Sec73 is an active-site residue. Sec73 is a non-standard amino acid (selenocysteine).

It belongs to the glutathione peroxidase family. As to quaternary structure, monomer. Has a tendency to form higher mass oligomers. Interacts with FUNDC1; this interaction promotes GPX4 recruitment into mitochondria through TOM/TIM complex where it is degraded by mitophagy.

It localises to the mitochondrion. It is found in the cytoplasm. The catalysed reaction is a hydroperoxy polyunsaturated fatty acid + 2 glutathione = a hydroxy polyunsaturated fatty acid + glutathione disulfide + H2O. The enzyme catalyses 2 glutathione + H2O2 = glutathione disulfide + 2 H2O. It catalyses the reaction tert-butyl hydroperoxide + 2 glutathione = tert-butanol + glutathione disulfide + H2O. It carries out the reaction cumene hydroperoxide + 2 glutathione = 2-phenylpropan-2-ol + glutathione disulfide + H2O. The catalysed reaction is (9S)-hydroperoxy-(10E,12Z)-octadecadienoate + 2 glutathione = (9S)-hydroxy-(10E,12Z)-octadecadienoate + glutathione disulfide + H2O. The enzyme catalyses (13S)-hydroperoxy-(9Z,11E)-octadecadienoate + 2 glutathione = (13S)-hydroxy-(9Z,11E)-octadecadienoate + glutathione disulfide + H2O. It catalyses the reaction (5S)-hydroperoxy-(6E,8Z,11Z,14Z)-eicosatetraenoate + 2 glutathione = (5S)-hydroxy-(6E,8Z,11Z,14Z)-eicosatetraenoate + glutathione disulfide + H2O. It carries out the reaction (12R)-hydroperoxy-(5Z,8Z,10E,14Z)-eicosatetraenoate + 2 glutathione = (12R)-hydroxy-(5Z,8Z,10E,14Z)-eicosatetraenoate + glutathione disulfide + H2O. The catalysed reaction is (12S)-hydroperoxy-(5Z,8Z,10E,14Z)-eicosatetraenoate + 2 glutathione = (12S)-hydroxy-(5Z,8Z,10E,14Z)-eicosatetraenoate + glutathione disulfide + H2O. The enzyme catalyses (15S)-hydroperoxy-(5Z,8Z,11Z,13E)-eicosatetraenoate + 2 glutathione = (15S)-hydroxy-(5Z,8Z,11Z,13E)-eicosatetraenoate + glutathione disulfide + H2O. It catalyses the reaction (5S)-hydroperoxy-(6E,8Z,11Z,14Z,17Z)-eicosapentaenoate + 2 glutathione = (5S)-hydroxy-(6E,8Z,11Z,14Z,17Z)-eicosapentaenoate + glutathione disulfide + H2O. It carries out the reaction (12S)-hydroperoxy-(5Z,8Z,10E,14Z,17Z)-eicosapentaenoate + 2 glutathione = (12S)-hydroxy-(5Z,8Z,10E,14Z,17Z)-eicosapentaenoate + glutathione disulfide + H2O. The catalysed reaction is (15S)-hydroperoxy-(5Z,8Z,11Z,13E,17Z)-eicosapentaenoate + 2 glutathione = (15S)-hydroxy-(5Z,8Z,11Z,13E,17Z)-eicosapentaenoate + glutathione disulfide + H2O. The enzyme catalyses (15S)-hydroperoxy-(11Z,13E)-eicosadienoate + 2 glutathione = (15S)-hydroxy-(11Z,13E)-eicosadienoate + glutathione disulfide + H2O. It catalyses the reaction (17S)-hydroperoxy-(4Z,7Z,10Z,13Z,15E,19Z)-docosahexaenoate + 2 glutathione = (17S)-hydroxy-(4Z,7Z,10Z,13Z,15E,19Z)-docosahexaenoate + glutathione disulfide + H2O. It carries out the reaction a hydroperoxy-1,2-diacyl-glycero-3-phosphocholine + 2 glutathione = a hydroxy-1,2-diacyl-glycero-3-phosphocholine + glutathione disulfide + H2O. Its function is as follows. Essential antioxidant peroxidase that directly reduces phospholipid hydroperoxide even if they are incorporated in membranes and lipoproteins. Can also reduce fatty acid hydroperoxide, cholesterol hydroperoxide and thymine hydroperoxide. Plays a key role in protecting cells from oxidative damage by preventing membrane lipid peroxidation. Required to prevent cells from ferroptosis, a non-apoptotic cell death resulting from an iron-dependent accumulation of lipid reactive oxygen species. The presence of selenocysteine (Sec) versus Cys at the active site is essential for life: it provides resistance to overoxidation and prevents cells against ferroptosis. The presence of Sec at the active site is also essential for the survival of a specific type of parvalbumin-positive interneurons, thereby preventing against fatal epileptic seizures. May be required to protect cells from the toxicity of ingested lipid hydroperoxides. Required for normal sperm development and male fertility. Essential for maturation and survival of photoreceptor cells. Plays a role in a primary T-cell response to viral and parasitic infection by protecting T-cells from ferroptosis and by supporting T-cell expansion. Plays a role of glutathione peroxidase in platelets in the arachidonic acid metabolism. Reduces hydroperoxy ester lipids formed by a 15-lipoxygenase that may play a role as down-regulator of the cellular 15-lipoxygenase pathway. Can also reduce small soluble hydroperoxides such as H2O2, cumene hydroperoxide and tert-butyl hydroperoxide. This Bos taurus (Bovine) protein is Phospholipid hydroperoxide glutathione peroxidase.